A 1390-amino-acid chain; its full sequence is Hepatocyte growth factor receptor (1390 aa).

The signal sequence occupies residues 1–24 (MKAPAVLAPGILVLLFTLVQRSNG). Residues 25-932 (ECKEALAKSE…VIVQPDQNFT (908 aa)) lie on the Extracellular side of the membrane. The Sema domain occupies 27-515 (KEALAKSEMN…TGKKITKIPL (489 aa)). An N-linked (GlcNAc...) asparagine glycan is attached at Asn-45. 4 disulfides stabilise this stretch: Cys-95–Cys-101, Cys-98–Cys-160, Cys-133–Cys-141, and Cys-172–Cys-175. Asn-106 is a glycosylation site (N-linked (GlcNAc...) asparagine). A glycan (N-linked (GlcNAc...) asparagine) is linked at Asn-149. An N-linked (GlcNAc...) asparagine glycan is attached at Asn-202. 2 disulfides stabilise this stretch: Cys-298–Cys-363 and Cys-385–Cys-397. N-linked (GlcNAc...) asparagine glycans are attached at residues Asn-399 and Asn-405. 4 disulfide bridges follow: Cys-520/Cys-538, Cys-526/Cys-561, Cys-529/Cys-545, and Cys-541/Cys-551. IPT/TIG domains are found at residues 563–655 (PAIY…FSYV), 657–739 (PVIT…FSYR), and 742–836 (PIVY…LIYV). Residue Thr-582 is glycosylated (O-linked (Man) threonine). The N-linked (GlcNAc...) asparagine glycan is linked to Asn-607. An intrachain disulfide couples Cys-610 to Cys-624. A glycan (N-linked (GlcNAc...) asparagine) is linked at Asn-635. Thr-676 carries an O-linked (Man) threonine glycan. Cys-697 and Cys-709 are disulfide-bonded. O-linked (Man) threonine glycosylation occurs at Thr-761. N-linked (GlcNAc...) asparagine glycans are attached at residues Asn-785, Asn-879, and Asn-930. A helical transmembrane segment spans residues 933–955 (GLIAGVVSISTALLLLLGFFLWL). Topologically, residues 956 to 1390 (KKRKQIKDLG…TRPASFWETS (435 aa)) are cytoplasmic. Ser-966 is subject to Phosphoserine. Position 977 is a phosphothreonine (Thr-977). Phosphoserine occurs at positions 990, 997, and 1000. A Phosphotyrosine modification is found at Tyr-1003. Residues 1078–1345 (VHFNEVIGRG…RISAIFSTFI (268 aa)) form the Protein kinase domain. Residues 1084 to 1092 (IGRGHFGCV) and Lys-1110 each bind ATP. Residue Asp-1204 is the Proton acceptor of the active site. The tract at residues 1212-1390 (LDEKFTVKVA…TRPASFWETS (179 aa)) is interaction with RANBP9. The residue at position 1230 (Tyr-1230) is a Phosphotyrosine. 2 positions are modified to phosphotyrosine; by autocatalysis: Tyr-1234 and Tyr-1235. The residue at position 1289 (Thr-1289) is a Phosphothreonine. The interval 1320-1359 (WHPKAEMRPSFSELVSRISAIFSTFIGEHYVHVNATYVNV) is interaction with MUC20. A phosphotyrosine; by autocatalysis mark is found at Tyr-1349 and Tyr-1356. Tyr-1365 is modified (phosphotyrosine).

This sequence belongs to the protein kinase superfamily. Tyr protein kinase family. Heterodimer made of an alpha chain (50 kDa) and a beta chain (145 kDa) which are disulfide linked. Binds PLXNB1. Interacts when phosphorylated with downstream effectors including STAT3, PIK3R1, SRC, PCLG1, GRB2 and GAB1. Interacts with SPSB1, SPSB2 and SPSB4. Interacts with INPP5D/SHIP1. When phosphorylated at Tyr-1356, interacts with INPPL1/SHIP2. Interacts with RANBP9 and RANBP10, as well as SPSB1, SPSB2, SPSB3 and SPSB4. SPSB1 binding occurs in the presence and in the absence of HGF, however HGF treatment has a positive effect on this interaction. Interacts with MUC20; prevents interaction with GRB2 and suppresses hepatocyte growth factor-induced cell proliferation. Interacts with GRB10. Interacts with PTPN1 and PTPN2. Interacts with LECT2; this interaction may have an antagonistic effect on receptor activation. Interacts with HSP90AA1 and HSP90AB1; the interaction suppresses MET kinase activity. Interacts with tensin TNS3. Interacts (when phosphorylated) with tensin TNS4 (via SH2 domain); the interaction increases MET protein stability by inhibiting MET endocytosis and subsequent lysosomal degradation. As to quaternary structure, (Microbial infection) Interacts via extracytoplasmic residues 25-656 with L.monocytogenes InlB; MET can bind HGF, its endogenous ligand, and InlB simultaneously. InlB probably dimerizes upon binding to MET, which encourages subsequent dimerization of MET. Post-translationally, autophosphorylated in response to ligand binding on Tyr-1234 and Tyr-1235 in the kinase domain leading to further phosphorylation of Tyr-1349 and Tyr-1356 in the C-terminal multifunctional docking site. Dephosphorylated by PTPRJ at Tyr-1349 and Tyr-1365. Dephosphorylated by PTPN1 and PTPN2. In terms of processing, ubiquitinated. Ubiquitination by CBL regulates MET endocytosis, resulting in decreasing plasma membrane receptor abundance, and in endosomal degradation and/or recycling of internalized receptors. O-mannosylation of IPT/TIG domains by TMEM260 is required for protein maturation. O-mannosylated residues are composed of single mannose glycans that are not elongated or modified. Post-translationally, (Microbial infection) Tyrosine phosphorylation is stimulated by L.monocytogenes InlB. Tyrosine phosphorylation is maximal 10-20 minutes after treatment with InlB and disappears by 60 minutes. The phosphorylated residues were not identified. Expressed in normal hepatocytes as well as in epithelial cells lining the stomach, the small and the large intestine. Found also in basal keratinocytes of esophagus and skin. High levels are found in liver, gastrointestinal tract, thyroid and kidney. Also present in the brain. Expressed in metaphyseal bone (at protein level).

It localises to the membrane. The protein resides in the secreted. The enzyme catalyses L-tyrosyl-[protein] + ATP = O-phospho-L-tyrosyl-[protein] + ADP + H(+). Its activity is regulated as follows. In its inactive state, the C-terminal tail interacts with the catalytic domain and inhibits the kinase activity. Upon ligand binding, the C-terminal tail is displaced and becomes phosphorylated, thus increasing the kinase activity. Its function is as follows. Receptor tyrosine kinase that transduces signals from the extracellular matrix into the cytoplasm by binding to hepatocyte growth factor/HGF ligand. Regulates many physiological processes including proliferation, scattering, morphogenesis and survival. Ligand binding at the cell surface induces autophosphorylation of MET on its intracellular domain that provides docking sites for downstream signaling molecules. Following activation by ligand, interacts with the PI3-kinase subunit PIK3R1, PLCG1, SRC, GRB2, STAT3 or the adapter GAB1. Recruitment of these downstream effectors by MET leads to the activation of several signaling cascades including the RAS-ERK, PI3 kinase-AKT, or PLCgamma-PKC. The RAS-ERK activation is associated with the morphogenetic effects while PI3K/AKT coordinates prosurvival effects. During embryonic development, MET signaling plays a role in gastrulation, development and migration of neuronal precursors, angiogenesis and kidney formation. During skeletal muscle development, it is crucial for the migration of muscle progenitor cells and for the proliferation of secondary myoblasts. In adults, participates in wound healing as well as organ regeneration and tissue remodeling. Also promotes differentiation and proliferation of hematopoietic cells. May regulate cortical bone osteogenesis. (Microbial infection) Acts as a receptor for Listeria monocytogenes internalin InlB, mediating entry of the pathogen into cells. In Homo sapiens (Human), this protein is Hepatocyte growth factor receptor (MET).